The primary structure comprises 174 residues: Protein GrpE (174 aa).

The segment at 1–35 is disordered; the sequence is MAQDIKNEEVEEVQEEEVVETAEETTPEKSELDLA. Residues 9–25 show a composition bias toward acidic residues; sequence EVEEVQEEEVVETAEET. A compositionally biased stretch (basic and acidic residues) spans 26–35; the sequence is TPEKSELDLA.

It belongs to the GrpE family. As to quaternary structure, homodimer.

It localises to the cytoplasm. Participates actively in the response to hyperosmotic and heat shock by preventing the aggregation of stress-denatured proteins, in association with DnaK and GrpE. It is the nucleotide exchange factor for DnaK and may function as a thermosensor. Unfolded proteins bind initially to DnaJ; upon interaction with the DnaJ-bound protein, DnaK hydrolyzes its bound ATP, resulting in the formation of a stable complex. GrpE releases ADP from DnaK; ATP binding to DnaK triggers the release of the substrate protein, thus completing the reaction cycle. Several rounds of ATP-dependent interactions between DnaJ, DnaK and GrpE are required for fully efficient folding. The polypeptide is Protein GrpE (Streptococcus pneumoniae (strain ATCC 700669 / Spain 23F-1)).